The following is a 402-amino-acid chain: Tryptophan synthase beta chain (402 aa).

At lysine 92 the chain carries N6-(pyridoxal phosphate)lysine.

The protein belongs to the TrpB family. Tetramer of two alpha and two beta chains. Requires pyridoxal 5'-phosphate as cofactor.

It catalyses the reaction (1S,2R)-1-C-(indol-3-yl)glycerol 3-phosphate + L-serine = D-glyceraldehyde 3-phosphate + L-tryptophan + H2O. It participates in amino-acid biosynthesis; L-tryptophan biosynthesis; L-tryptophan from chorismate: step 5/5. Its function is as follows. The beta subunit is responsible for the synthesis of L-tryptophan from indole and L-serine. In Staphylococcus epidermidis (strain ATCC 35984 / DSM 28319 / BCRC 17069 / CCUG 31568 / BM 3577 / RP62A), this protein is Tryptophan synthase beta chain.